We begin with the raw amino-acid sequence, 99 residues long: Aspartyl/glutamyl-tRNA(Asn/Gln) amidotransferase subunit C (99 aa).

The protein belongs to the GatC family. As to quaternary structure, heterotrimer of A, B and C subunits.

The enzyme catalyses L-glutamyl-tRNA(Gln) + L-glutamine + ATP + H2O = L-glutaminyl-tRNA(Gln) + L-glutamate + ADP + phosphate + H(+). It catalyses the reaction L-aspartyl-tRNA(Asn) + L-glutamine + ATP + H2O = L-asparaginyl-tRNA(Asn) + L-glutamate + ADP + phosphate + 2 H(+). Its function is as follows. Allows the formation of correctly charged Asn-tRNA(Asn) or Gln-tRNA(Gln) through the transamidation of misacylated Asp-tRNA(Asn) or Glu-tRNA(Gln) in organisms which lack either or both of asparaginyl-tRNA or glutaminyl-tRNA synthetases. The reaction takes place in the presence of glutamine and ATP through an activated phospho-Asp-tRNA(Asn) or phospho-Glu-tRNA(Gln). In Paraburkholderia phytofirmans (strain DSM 17436 / LMG 22146 / PsJN) (Burkholderia phytofirmans), this protein is Aspartyl/glutamyl-tRNA(Asn/Gln) amidotransferase subunit C.